Here is a 321-residue protein sequence, read N- to C-terminus: Methyltransferase cfoB (321 aa).

It belongs to the methyltransferase superfamily.

Its pathway is secondary metabolite biosynthesis; flavonoid biosynthesis. In terms of biological role, methyltransferase; part of the gene cluster that mediates the biosynthesis of chlorflavonin, a fungal flavonoid with acetolactate synthase inhibitory activity. Within the pathway, cfoB is responsible for the methylation at position C7-OH of flavonoid. The pathway begins with the PKS-NRPS hybrid synthetase cfoA that uses benzoic acid or p-hydroxybenzoic acid as a starter unit with four rounds of chain elongation using malonyl-CoA to form the chalcone skeleton. Then, a new type of chalcone isomerase, cfoK, catalyzes the conversion of the chalcone into a flavanone by a histidine-mediated oxa-Michael addition mechanism. The desaturation of flavanone to flavone is catalyzed by a new type of flavone synthase, the flavin mononucleotide (FMN)-dependent oxidoreductase cfoJ. Monooxygenases cfoF, cfoG, and P450 cfoH are responsible for the hydroxylation of the flavonoid skeleton at sites C3, C8, and C2', respectively. Like cfoF, the dehydratase cfoI also plays a role in the hydroxylation of position C3. Methyltransferases cfoB, cfoC, and cfoD then catalyze the methylation of C7-OH, C8-OH, and C3-OH, respectively. Finally, the monooxygenase cfoE is responsible for the chlorination of flavonoid at position C3'. This chain is Methyltransferase cfoB, found in Aspergillus candidus.